Consider the following 92-residue polypeptide: UPF0473 protein OB2006 (92 aa).

Belongs to the UPF0473 family.

The sequence is that of UPF0473 protein OB2006 from Oceanobacillus iheyensis (strain DSM 14371 / CIP 107618 / JCM 11309 / KCTC 3954 / HTE831).